Reading from the N-terminus, the 220-residue chain is Iron-sulfur cluster repair protein YtfE (220 aa).

It belongs to the RIC family. YtfE subfamily. As to quaternary structure, homodimer.

It localises to the cytoplasm. Functionally, di-iron-containing protein involved in the repair of iron-sulfur clusters damaged by oxidative and nitrosative stress conditions. This is Iron-sulfur cluster repair protein YtfE from Escherichia coli O8 (strain IAI1).